The chain runs to 1866 residues: Nucleoporin Nup188 (1866 aa).

Belongs to the Nup188 family. In terms of assembly, part of the nuclear pore complex (NPC).

It localises to the nucleus. It is found in the nuclear pore complex. Its function is as follows. Component of the nuclear pore complex (NPC), a complex required for the trafficking across the nuclear envelope. Required for proper protein transport into the nucleus. The chain is Nucleoporin Nup188 from Drosophila melanogaster (Fruit fly).